The primary structure comprises 596 residues: Phosphoprotein (596 aa).

Polar residues-rich tracts occupy residues 1–11 (MENNAKDNQIM), 38–66 (TDSQ…QLES), and 74–85 (ENSGSVNENRQL). Disordered stretches follow at residues 1–25 (MENN…SSDI), 38–196 (TDSQ…ESIS), and 220–352 (KNTR…EEST). The N0 binding stretch occupies residues 33–41 (EFILSTDSQ). The segment covering 88-97 (SHERATETKN) has biased composition (basic and acidic residues). Residues 127–144 (ISRSSPDPNNGTQIQESI) show a composition bias toward polar residues. Basic and acidic residues-rich tracts occupy residues 151-168 (EMDK…KDVP) and 233-249 (EDDK…EDTN). Over residues 270–324 (TLKISTTTGESTRPQSGSQGKRITSWNILNSESGSRTESTSQNSQIPTSGKSNTV) the composition is skewed to polar residues. Residues 331-352 (LESRIKTQKTDGKEREDTEEST) show a composition bias toward basic and acidic residues. The multimerization stretch occupies residues 374-441 (LDLYQDKRVV…KMDESHRRLI (68 aa)). Residues 416–436 (LNQIQNEILSLKTDLKKMDES) adopt a coiled-coil conformation. Positions 442-475 (ENQKEQLSLITSLISNLKIMTERGGKKDQPENSG) are l protein binding.

Belongs to the respirovirus P protein family. Homotetramer. Interacts (via multimerization domain) with polymerase L; this interaction forms the polymerase complex. Interacts (via N-terminus) with N0; this interaction allows P to chaperon N0 before encapsidation and form the N-P complex. Interacts (via C-terminus) with N-RNA template; this interaction positions the polymerase on the template.

Essential cofactor of the RNA polymerase L that plays a central role in the transcription and replication by forming the polymerase complex with RNA polymerase L and recruiting L to the genomic N-RNA template for RNA synthesis. Also plays a central role in the encapsidation of nascent RNA chains by forming the encapsidation complex with the nucleocapsid protein N (N-P complex). Acts as a chaperone for newly synthesized free N protein, so-called N0, allowing encapsidation of nascent RNA chains during replication. The nucleoprotein protein N prevents excessive phosphorylation of P, which leads to down-regulation of viral transcription/ replication. Participates, together with N, in the formation of viral factories (viroplasms), which are large inclusions in the host cytoplasm where replication takes place. Recruits host PI4KB and remodel the host endoplasmic reticulum membrane to form viral replication factories. This Bovine parainfluenza 3 virus (BPIV-3) protein is Phosphoprotein (P/V/D).